The primary structure comprises 181 residues: Protein GrpE (181 aa).

Over residues 1 to 20 (MENTQENPASQSAEENGSET) the composition is skewed to polar residues. The interval 1 to 39 (MENTQENPASQSAEENGSETQAAQDAAPAAEAADAALAE) is disordered. Residues 21-39 (QAAQDAAPAAEAADAALAE) are compositionally biased toward low complexity.

Belongs to the GrpE family. In terms of assembly, homodimer.

It is found in the cytoplasm. Its function is as follows. Participates actively in the response to hyperosmotic and heat shock by preventing the aggregation of stress-denatured proteins, in association with DnaK and GrpE. It is the nucleotide exchange factor for DnaK and may function as a thermosensor. Unfolded proteins bind initially to DnaJ; upon interaction with the DnaJ-bound protein, DnaK hydrolyzes its bound ATP, resulting in the formation of a stable complex. GrpE releases ADP from DnaK; ATP binding to DnaK triggers the release of the substrate protein, thus completing the reaction cycle. Several rounds of ATP-dependent interactions between DnaJ, DnaK and GrpE are required for fully efficient folding. The polypeptide is Protein GrpE (Burkholderia multivorans (strain ATCC 17616 / 249)).